We begin with the raw amino-acid sequence, 185 residues long: Ribosome maturation factor RimM (185 aa).

Residues 105–184 (KDEYYWKDII…IVVVDWEIYK (80 aa)) enclose the PRC barrel domain.

The protein belongs to the RimM family. As to quaternary structure, binds ribosomal protein uS19.

It localises to the cytoplasm. An accessory protein needed during the final step in the assembly of 30S ribosomal subunit, possibly for assembly of the head region. Essential for efficient processing of 16S rRNA. May be needed both before and after RbfA during the maturation of 16S rRNA. It has affinity for free ribosomal 30S subunits but not for 70S ribosomes. The chain is Ribosome maturation factor RimM from Blochmanniella floridana.